The primary structure comprises 191 residues: dTTP/UTP pyrophosphatase (191 aa).

Asp75 (proton acceptor) is an active-site residue.

This sequence belongs to the Maf family. YhdE subfamily. A divalent metal cation is required as a cofactor.

It is found in the cytoplasm. The enzyme catalyses dTTP + H2O = dTMP + diphosphate + H(+). The catalysed reaction is UTP + H2O = UMP + diphosphate + H(+). Nucleoside triphosphate pyrophosphatase that hydrolyzes dTTP and UTP. May have a dual role in cell division arrest and in preventing the incorporation of modified nucleotides into cellular nucleic acids. This is dTTP/UTP pyrophosphatase from Aliivibrio fischeri (strain ATCC 700601 / ES114) (Vibrio fischeri).